Reading from the N-terminus, the 236-residue chain is Leucyl/phenylalanyl-tRNA--protein transferase (236 aa).

The protein belongs to the L/F-transferase family.

The protein localises to the cytoplasm. It carries out the reaction N-terminal L-lysyl-[protein] + L-leucyl-tRNA(Leu) = N-terminal L-leucyl-L-lysyl-[protein] + tRNA(Leu) + H(+). The enzyme catalyses N-terminal L-arginyl-[protein] + L-leucyl-tRNA(Leu) = N-terminal L-leucyl-L-arginyl-[protein] + tRNA(Leu) + H(+). The catalysed reaction is L-phenylalanyl-tRNA(Phe) + an N-terminal L-alpha-aminoacyl-[protein] = an N-terminal L-phenylalanyl-L-alpha-aminoacyl-[protein] + tRNA(Phe). Functionally, functions in the N-end rule pathway of protein degradation where it conjugates Leu, Phe and, less efficiently, Met from aminoacyl-tRNAs to the N-termini of proteins containing an N-terminal arginine or lysine. The chain is Leucyl/phenylalanyl-tRNA--protein transferase from Shewanella putrefaciens (strain CN-32 / ATCC BAA-453).